The chain runs to 104 residues: Large ribosomal subunit protein bL21 (104 aa).

The protein belongs to the bacterial ribosomal protein bL21 family. As to quaternary structure, part of the 50S ribosomal subunit. Contacts protein L20.

Its function is as follows. This protein binds to 23S rRNA in the presence of protein L20. The polypeptide is Large ribosomal subunit protein bL21 (Tropheryma whipplei (strain TW08/27) (Whipple's bacillus)).